Consider the following 362-residue polypeptide: Aminomethyltransferase (362 aa).

This sequence belongs to the GcvT family. As to quaternary structure, the glycine cleavage system is composed of four proteins: P, T, L and H.

It catalyses the reaction N(6)-[(R)-S(8)-aminomethyldihydrolipoyl]-L-lysyl-[protein] + (6S)-5,6,7,8-tetrahydrofolate = N(6)-[(R)-dihydrolipoyl]-L-lysyl-[protein] + (6R)-5,10-methylene-5,6,7,8-tetrahydrofolate + NH4(+). In terms of biological role, the glycine cleavage system catalyzes the degradation of glycine. The chain is Aminomethyltransferase from Chromobacterium violaceum (strain ATCC 12472 / DSM 30191 / JCM 1249 / CCUG 213 / NBRC 12614 / NCIMB 9131 / NCTC 9757 / MK).